The sequence spans 504 residues: Protein FMP42 (504 aa).

The Vacuolar portion of the chain corresponds to 1-11 (MTSTRTLRYAQ). A helical transmembrane segment spans residues 12–32 (VACACIWCLFSAGIIFGFAAL). The Cytoplasmic portion of the chain corresponds to 33 to 64 (KPILISEGVYHELCDPKDGDRLLCTAQDLKLN). The helical transmembrane segment at 65 to 85 (FIFALSATVTNIMALPVGKIL) threads the bilayer. The Vacuolar portion of the chain corresponds to 86-91 (DMYGPR). The chain crosses the membrane as a helical span at residues 92 to 112 (VCGIIGSCLLFLASGNFISAK). The Cytoplasmic segment spans residues 113–119 (HLVSLWD). Residues 120–140 (PYLVGYTLLAVAGPFVFISCF) traverse the membrane as a helical segment. The Vacuolar segment spans residues 141–150 (QLANSFPQRS). Residues 151-171 (GTVLALLTGSFDSSSALFLLY) traverse the membrane as a helical segment. Residues 172 to 186 (RLLYQNWFPTLNVSR) lie on the Cytoplasmic side of the membrane. The helical transmembrane segment at 187 to 207 (FFTLYLIVPVFILACQLTIMP) threads the bilayer. Over 208 to 302 (HSSYKTVNHI…KSAYEQIKSP (95 aa)) the chain is Vacuolar. 3 positions are modified to phosphoserine: Ser-238, Ser-249, and Ser-269. Residues 303-323 (WFYLMLLFALVAMLRINYFIA) traverse the membrane as a helical segment. Residues 324–344 (TVRTQEEYLLNDPDLALKLNS) lie on the Cytoplasmic side of the membrane. The chain crosses the membrane as a helical span at residues 345 to 365 (IFDMLLPLGGAVSIPFIGLLL). Over 366–385 (DHTDTLSTLTILFTTSTAIG) the chain is Vacuolar. The chain crosses the membrane as a helical span at residues 386–406 (VFGLIPNSFTWNLIGIVLLVV). Residues 407–421 (YRPFYYTVVSDYSSK) are Cytoplasmic-facing. A helical transmembrane segment spans residues 422–442 (VFGFDTFGTVYGLLSCICGIF). The Vacuolar portion of the chain corresponds to 443–462 (NMSQNLLDKWTHTTFNMNPF). The helical transmembrane segment at 463–483 (PINLTLVILTVVFSLTLTFYI) threads the bilayer. The Cytoplasmic portion of the chain corresponds to 484-504 (RSQILPKPVNERGLSSNYQTI).

This sequence belongs to the SLC43A transporter (TC 2.A.1.44) family.

It localises to the vacuole membrane. The sequence is that of Protein FMP42 (FMP42) from Saccharomyces cerevisiae (strain ATCC 204508 / S288c) (Baker's yeast).